Here is a 513-residue protein sequence, read N- to C-terminus: PPE family protein PPE4 (513 aa).

The next 3 membrane-spanning stretches (helical) occupy residues 233-253 (IIIA…PLLF), 277-297 (FLLP…PIVL), and 309-329 (LAAA…AVTG). 2 disordered regions span residues 395-446 (AAAA…ERGA) and 469-513 (LAGD…HDSK).

The protein belongs to the mycobacterial PPE family.

It localises to the cell membrane. Its function is as follows. Important for the siderophore-mediated iron-acquisition function of ESX-3. In Mycobacterium tuberculosis (strain CDC 1551 / Oshkosh), this protein is PPE family protein PPE4 (PPE4).